A 307-amino-acid polypeptide reads, in one-letter code: Nicotinamide/nicotinic acid mononucleotide adenylyltransferase 2 (307 aa).

Serine 16 and phenylalanine 17 together coordinate NAD(+). Histidine 24 contacts ATP. Residues tryptophan 92 and threonine 95 each coordinate NAD(+). Residues cysteine 164 and cysteine 165 are each lipidated (S-palmitoyl cysteine). Glycine 200, aspartate 202, leucine 212, tryptophan 213, and arginine 232 together coordinate NAD(+). Residue 271-274 (TKSR) participates in ATP binding.

The protein belongs to the eukaryotic NMN adenylyltransferase family. Monomer. The cofactor is Mg(2+). In terms of processing, degraded in response to injured neurite. Degradation is caused by polyubiquitination by MYCBP2 after recognition by FBXO45. Post-translationally, palmitoylated; palmitoylation is required for membrane association. In terms of tissue distribution, expressed predominantly in the brain and nervous system.

The protein resides in the golgi apparatus membrane. Its subcellular location is the cytoplasmic vesicle membrane. The protein localises to the cytoplasm. It is found in the cell projection. It localises to the axon. It catalyses the reaction beta-nicotinamide D-ribonucleotide + ATP + H(+) = diphosphate + NAD(+). The enzyme catalyses nicotinate beta-D-ribonucleotide + ATP + H(+) = deamido-NAD(+) + diphosphate. Its pathway is cofactor biosynthesis; NAD(+) biosynthesis; NAD(+) from nicotinamide D-ribonucleotide: step 1/1. The protein operates within cofactor biosynthesis; NAD(+) biosynthesis; deamido-NAD(+) from nicotinate D-ribonucleotide: step 1/1. Its activity is regulated as follows. Inhibited by P1-(adenosine-5')-P3-(nicotinamide-riboside-5')-triphosphate (Np3AD) and P1-(adenosine-5')-P4-(nicotinamide-riboside-5')-tetraphosphate (Np4AD). Nicotinamide/nicotinate-nucleotide adenylyltransferase that acts as an axon maintenance factor. Axon survival factor required for the maintenance of healthy axons: acts by delaying Wallerian axon degeneration, an evolutionarily conserved process that drives the loss of damaged axons. Catalyzes the formation of NAD(+) from nicotinamide mononucleotide (NMN) and ATP. Can also use the deamidated form; nicotinic acid mononucleotide (NaMN) as substrate but with a lower efficiency. Cannot use triazofurin monophosphate (TrMP) as substrate. Also catalyzes the reverse reaction, i.e. the pyrophosphorolytic cleavage of NAD(+). For the pyrophosphorolytic activity prefers NAD(+), NADH and NaAD as substrates and degrades nicotinic acid adenine dinucleotide phosphate (NHD) less effectively. Fails to cleave phosphorylated dinucleotides NADP(+), NADPH and NaADP(+). Also acts as an activator of ADP-ribosylation by supporting the catalytic activity of PARP16 and promoting mono-ADP-ribosylation of ribosomes by PARP16. May be involved in the maintenance of axonal integrity. In Mus musculus (Mouse), this protein is Nicotinamide/nicotinic acid mononucleotide adenylyltransferase 2.